The sequence spans 88 residues: MTKGTTSFGKRHNKSHTQCRRCGRKSYHIQKKTCSSCGYPSARLRKYNWSEKAKRRRTTGTGRMLHLKRVHRRFKQGFRSGPPKPVKA.

The interval 1–24 (MTKGTTSFGKRHNKSHTQCRRCGR) is disordered. Basic residues predominate over residues 9 to 24 (GKRHNKSHTQCRRCGR). Residues C19, C22, C34, and C37 each contribute to the Zn(2+) site. A C4-type zinc finger spans residues 19 to 37 (CRRCGRKSYHIQKKTCSSC).

Belongs to the eukaryotic ribosomal protein eL37 family. The cofactor is Zn(2+).

Binds to the 23S rRNA. This Schistosoma mansoni (Blood fluke) protein is Large ribosomal subunit protein eL37 (RPL37).